A 215-amino-acid chain; its full sequence is Large ribosomal subunit protein bL25 (215 aa).

Residues 174–215 (ETVVTVQPPATEKEEETEAAVTDSEPEVINEKEEPAEEAKEE) are disordered. The segment covering 186-215 (KEEETEAAVTDSEPEVINEKEEPAEEAKEE) has biased composition (acidic residues).

Belongs to the bacterial ribosomal protein bL25 family. CTC subfamily. Part of the 50S ribosomal subunit; part of the 5S rRNA/L5/L18/L25 subcomplex. Contacts the 5S rRNA. Binds to the 5S rRNA independently of L5 and L18.

This is one of the proteins that binds to the 5S RNA in the ribosome where it forms part of the central protuberance. This chain is Large ribosomal subunit protein bL25, found in Halalkalibacterium halodurans (strain ATCC BAA-125 / DSM 18197 / FERM 7344 / JCM 9153 / C-125) (Bacillus halodurans).